The chain runs to 186 residues: Adenylate kinase (186 aa).

Glycine 10–threonine 15 contacts ATP. The NMP stretch occupies residues alanine 30–valine 55. AMP-binding positions include threonine 31, arginine 36, glycine 53 to valine 55, glycine 81 to arginine 84, and glutamine 88. Residues alanine 122 to aspartate 132 form an LID region. Residue arginine 123 participates in ATP binding. Positions 129 and 140 each coordinate AMP. Lysine 168 contacts ATP.

This sequence belongs to the adenylate kinase family. In terms of assembly, monomer.

The protein localises to the cytoplasm. It carries out the reaction AMP + ATP = 2 ADP. The protein operates within purine metabolism; AMP biosynthesis via salvage pathway; AMP from ADP: step 1/1. Its function is as follows. Catalyzes the reversible transfer of the terminal phosphate group between ATP and AMP. Plays an important role in cellular energy homeostasis and in adenine nucleotide metabolism. In Tropheryma whipplei (strain TW08/27) (Whipple's bacillus), this protein is Adenylate kinase.